The following is a 437-amino-acid chain: Adenylosuccinate synthetase (437 aa).

GTP contacts are provided by residues 25 to 31 (GDEGKGK), 53 to 55 (GHT), and Lys-62. Residue Asp-26 is the Proton acceptor of the active site. Positions 26 and 53 each coordinate Mg(2+). Residues 26–29 (DEGK) and 51–54 (NAGH) each bind IMP. The active-site Proton donor is the His-54. IMP-binding residues include Thr-141, Arg-155, Asn-232, and Thr-247. Residue Thr-307 coordinates GTP. 307-313 (TTTKRPR) contacts substrate. Residue Arg-311 participates in IMP binding. Residues Arg-313, 339–341 (KLD), and 425–427 (GIG) contribute to the GTP site.

Belongs to the adenylosuccinate synthetase family. As to quaternary structure, homodimer. It depends on Mg(2+) as a cofactor.

Its subcellular location is the cytoplasm. It catalyses the reaction IMP + L-aspartate + GTP = N(6)-(1,2-dicarboxyethyl)-AMP + GDP + phosphate + 2 H(+). The protein operates within purine metabolism; AMP biosynthesis via de novo pathway; AMP from IMP: step 1/2. Functionally, plays an important role in the salvage pathway for purine nucleotide biosynthesis. Catalyzes the first committed step in the biosynthesis of AMP from IMP. This Plasmodium vivax (strain Salvador I) protein is Adenylosuccinate synthetase.